Reading from the N-terminus, the 350-residue chain is CMP-N-acetylneuraminate-beta-galactosamide-alpha-2,3-sialyltransferase 2 (350 aa).

Residues 1–6 (MKCSLR) lie on the Cytoplasmic side of the membrane. Residues 7–27 (VWFLSMAFLLVFIMSLLFTYS) traverse the membrane as a helical; Signal-anchor for type II membrane protein segment. The Lumenal portion of the chain corresponds to 28 to 350 (HHSMATLPYL…ASKIEVYRGN (323 aa)). Intrachain disulfides connect Cys70–Cys75, Cys72–Cys149, and Cys152–Cys291. 3 residues coordinate substrate: Gln116, Asn157, and Asn180. Residue Asn211 is glycosylated (N-linked (GlcNAc...) asparagine). 6 residues coordinate substrate: Tyr240, Tyr276, Gly280, Gly300, His309, and His326.

It belongs to the glycosyltransferase 29 family. As to quaternary structure, homodimer; disulfide-linked. Homodimer formation occurs in the endoplasmic reticulum. Post-translationally, the soluble form derives from the membrane form by proteolytic processing. In terms of processing, N-glycosylated; necessary for proper exit from endoplasmic reticulum and trafficking to the Golgi apparatus. As to expression, strongly expressed in brain and liver and to a lesser extent in heart and kidney. Scarcely detectable in lung, pancreas, spleen and submaxillary gland. Expressed in L5 dorsal root ganglion (DRG) neurons (at protein level).

It is found in the golgi apparatus. The protein localises to the golgi stack membrane. The protein resides in the secreted. It catalyses the reaction a beta-D-galactosyl-(1-&gt;3)-N-acetyl-alpha-D-galactosaminyl derivative + CMP-N-acetyl-beta-neuraminate = an N-acetyl-alpha-neuraminyl-(2-&gt;3)-beta-D-galactosyl-(1-&gt;3)-N-acetyl-alpha-D-galactosaminyl derivative + CMP + H(+). It carries out the reaction a ganglioside GM1 (d18:1(4E)) + CMP-N-acetyl-beta-neuraminate = a ganglioside GD1a (d18:1(4E)) + CMP + H(+). The enzyme catalyses ganglioside GM1 (d18:1(4E)/18:0) + CMP-N-acetyl-beta-neuraminate = ganglioside GD1a (18:1(4E)/18:0) + CMP + H(+). The catalysed reaction is a ganglioside GA1 + CMP-N-acetyl-beta-neuraminate = a ganglioside GM1b + CMP + H(+). It catalyses the reaction a ganglioside GA1 (d18:1(4E)) + CMP-N-acetyl-beta-neuraminate = a ganglioside GM1b (d18:1(4E)) + CMP + H(+). It carries out the reaction a ganglioside GD1b + CMP-N-acetyl-beta-neuraminate = a ganglioside GT1b + CMP + H(+). The enzyme catalyses a ganglioside GD1b (d18:1(4E)) + CMP-N-acetyl-beta-neuraminate = a ganglioside GT1b (d18:1(4E)) + CMP + H(+). The catalysed reaction is a globoside GalGb4Cer + CMP-N-acetyl-beta-neuraminate = a globoside MSGG + CMP + H(+). It functions in the pathway protein modification; protein glycosylation. It participates in glycolipid biosynthesis. Functionally, a beta-galactoside alpha2-3 sialyltransferase primarily involved in terminal sialylation of ganglio and globo series glycolipids. Catalyzes the transfer of sialic acid (N-acetyl-neuraminic acid; Neu5Ac) from the nucleotide sugar donor CMP-Neu5Ac onto acceptor Galbeta-(1-&gt;3)-GalNAc-terminated glycoconjugates through an alpha2-3 linkage. Sialylates GM1/GM1a, GA1/asialo-GM1 and GD1b gangliosides to form GD1a, GM1b and GT1b, respectively. Together with ST3GAL3, primarily responsible for biosynthesis of brain GD1a and GT1b that function as ligands for myelin-associated glycoprotein MAG on axons, regulating MAG expression and axonal myelin stability and regeneration. Via GT1b regulates TLR2 signaling in spinal cord microglia in response to nerve injury. Responsible for the sialylation of the pluripotent stem cell- and cancer stem cell-associated antigen SSEA3, forming SSEA4. Sialylates with low efficiency asialofetuin, presumably onto O-glycosidically linked Galbeta-(1-&gt;3)-GalNAc-O-Ser. This is CMP-N-acetylneuraminate-beta-galactosamide-alpha-2,3-sialyltransferase 2 from Mus musculus (Mouse).